Reading from the N-terminus, the 81-residue chain is Large ribosomal subunit protein bL28 (81 aa).

Belongs to the bacterial ribosomal protein bL28 family.

The polypeptide is Large ribosomal subunit protein bL28 (Gloeobacter violaceus (strain ATCC 29082 / PCC 7421)).